An 820-amino-acid polypeptide reads, in one-letter code: DNA mismatch repair protein MutS (820 aa).

618 to 625 contacts ATP; sequence GPNMAGKS.

This sequence belongs to the DNA mismatch repair MutS family.

Functionally, this protein is involved in the repair of mismatches in DNA. It is possible that it carries out the mismatch recognition step. This protein has a weak ATPase activity. The protein is DNA mismatch repair protein MutS of Chlamydia trachomatis serovar L2b (strain UCH-1/proctitis).